Consider the following 413-residue polypeptide: Glutamyl-tRNA reductase (413 aa).

Substrate contacts are provided by residues 49–52 (TCNR), S105, 110–112 (EPQ), and Q116. The active-site Nucleophile is the C50. 185 to 190 (GAGETI) is a binding site for NADP(+).

The protein belongs to the glutamyl-tRNA reductase family. Homodimer.

The catalysed reaction is (S)-4-amino-5-oxopentanoate + tRNA(Glu) + NADP(+) = L-glutamyl-tRNA(Glu) + NADPH + H(+). The protein operates within porphyrin-containing compound metabolism; protoporphyrin-IX biosynthesis; 5-aminolevulinate from L-glutamyl-tRNA(Glu): step 1/2. In terms of biological role, catalyzes the NADPH-dependent reduction of glutamyl-tRNA(Glu) to glutamate 1-semialdehyde (GSA). The chain is Glutamyl-tRNA reductase from Coxiella burnetii (strain Dugway 5J108-111).